The primary structure comprises 200 residues: 3-isopropylmalate dehydratase small subunit (200 aa).

It belongs to the LeuD family. LeuD type 1 subfamily. As to quaternary structure, heterodimer of LeuC and LeuD.

It catalyses the reaction (2R,3S)-3-isopropylmalate = (2S)-2-isopropylmalate. Its pathway is amino-acid biosynthesis; L-leucine biosynthesis; L-leucine from 3-methyl-2-oxobutanoate: step 2/4. In terms of biological role, catalyzes the isomerization between 2-isopropylmalate and 3-isopropylmalate, via the formation of 2-isopropylmaleate. The polypeptide is 3-isopropylmalate dehydratase small subunit (Saccharopolyspora erythraea (strain ATCC 11635 / DSM 40517 / JCM 4748 / NBRC 13426 / NCIMB 8594 / NRRL 2338)).